Here is a 1857-residue protein sequence, read N- to C-terminus: Peripheral-type benzodiazepine receptor-associated protein 1 (1857 aa).

Disordered stretches follow at residues 1-103 (MEQL…RPED), 284-321 (QRET…QEDA), and 565-629 (PKDL…DTAS). Positions 55 to 67 (LRSEESSKPKGDG) are enriched in basic and acidic residues. Positions 87–96 (LGQQASSSGP) are enriched in polar residues. The segment covering 289–298 (PLPPSWPPGP) has biased composition (pro residues). Low complexity-rich tracts occupy residues 299-316 (ALQA…GEAT) and 603-616 (SLSN…IHNS). An SH3 1 domain is found at 653-720 (ARIQVFLARY…PSNFVERVSD (68 aa)). Positions 729 to 789 (PELADLSHSS…PSPEGLGEPP (61 aa)) are disordered. The segment covering 755–764 (GGQSSVGRSQ) has biased composition (low complexity). Fibronectin type-III domains lie at 791–882 (VPYP…ARAG), 884–976 (VPSQ…TLPA), and 981–1081 (APLD…LAPA). 3 disordered regions span residues 1083–1311 (LPAR…SDEE), 1330–1479 (FSIP…CSRG), and 1501–1601 (YDSE…RGVR). Residues 1098-1116 (ARAPLASASPGPGDPSSPL) show a composition bias toward low complexity. Residues 1138-1147 (EMAKGSHEDP) show a composition bias toward basic and acidic residues. Over residues 1201–1218 (ASSSTQGARAQQAPNTEM) the composition is skewed to polar residues. Acidic residues predominate over residues 1259-1274 (DIQEEEEEEEEEEEEE). A compositionally biased stretch (polar residues) spans 1278–1292 (RTCSFQKQVAGNSIR). Positions 1333 to 1346 (PEEEEEEEEDEEEE) are enriched in acidic residues. Composition is skewed to basic and acidic residues over residues 1420 to 1429 (RPPDPREHCS) and 1554 to 1586 (AWEK…EARG). The 69-residue stretch at 1625 to 1693 (LPVRIFVALF…PCNMVAEVAV (69 aa)) folds into the SH3 2 domain. Disordered stretches follow at residues 1723-1761 (VYST…VPSA) and 1823-1857 (SNFL…RVQC). The SH3 3 domain occupies 1764–1831 (KAPHSMVAAF…PSNFLEGPGP (68 aa)).

It belongs to the RIMBP family. As to quaternary structure, interacts with RIMS1 and RIMS2. Interacts with TSPO. Interacts with CACNA1A. As to expression, predominantly expressed in brain, pituitary gland and thymus in adults. In adult brain, highest expression found in temporal lobe and the putamen, followed by amygdala, caudate nucleus, cerebral cortex, occipital and frontal lobe. A high expression level is also observed in fetal tissues like brain, heart, kidney and thymus.

Its subcellular location is the cytoplasm. The protein localises to the mitochondrion. In terms of biological role, required for synaptic transmission regulation. It probably controls the recruitement of voltage-gated calcium channels to the presynaptic membrane, and modulates neurotransmitter release. This chain is Peripheral-type benzodiazepine receptor-associated protein 1, found in Homo sapiens (Human).